Reading from the N-terminus, the 919-residue chain is Isoleucine--tRNA ligase (919 aa).

Residues 57-67 (PYANGNIHIGH) carry the 'HIGH' region motif. An L-isoleucyl-5'-AMP-binding site is contributed by Glu-569. Positions 610 to 614 (KMSKS) match the 'KMSKS' region motif. Residue Lys-613 coordinates ATP. Zn(2+)-binding residues include Cys-896, Cys-899, Cys-911, and Cys-914.

It belongs to the class-I aminoacyl-tRNA synthetase family. IleS type 1 subfamily. As to quaternary structure, monomer. Requires Zn(2+) as cofactor.

It is found in the cytoplasm. It catalyses the reaction tRNA(Ile) + L-isoleucine + ATP = L-isoleucyl-tRNA(Ile) + AMP + diphosphate. Functionally, catalyzes the attachment of isoleucine to tRNA(Ile). As IleRS can inadvertently accommodate and process structurally similar amino acids such as valine, to avoid such errors it has two additional distinct tRNA(Ile)-dependent editing activities. One activity is designated as 'pretransfer' editing and involves the hydrolysis of activated Val-AMP. The other activity is designated 'posttransfer' editing and involves deacylation of mischarged Val-tRNA(Ile). The chain is Isoleucine--tRNA ligase from Aliarcobacter butzleri (strain RM4018) (Arcobacter butzleri).